We begin with the raw amino-acid sequence, 259 residues long: Ferritin-4, chloroplastic (259 aa).

The transit peptide at 1–57 (MLLKTVSSSSSSALSLVNFHGVKKDVSPLLPSISSNLRVSSGKSGNLTFSFRASKSS) directs the protein to the chloroplast. The interval 58 to 90 (TTDALSGVVFEPFKEVKKELDLVPTSSHLSLAR) is extension peptide (EP). The region spanning 91-244 (QKYSDECEAA…EYVAQLRRVG (154 aa)) is the Ferritin-like diiron domain. Glu-108, Glu-143, His-146, Glu-192, and Gln-226 together coordinate Fe cation.

Belongs to the ferritin family. As to quaternary structure, oligomer of 24 subunits. There are two types of subunits: L (light) chain and H (heavy) chain. The major chain can be light or heavy, depending on the species and tissue type. The functional molecule forms a roughly spherical shell with a diameter of 12 nm and contains a central cavity into which the insoluble mineral iron core is deposited.

Its subcellular location is the plastid. The protein resides in the chloroplast. It carries out the reaction 4 Fe(2+) + O2 + 4 H(+) = 4 Fe(3+) + 2 H2O. In terms of biological role, stores iron in a soluble, non-toxic, readily available form. Important for iron homeostasis. Has ferroxidase activity. Iron is taken up in the ferrous form and deposited as ferric hydroxides after oxidation. This chain is Ferritin-4, chloroplastic (FER4), found in Arabidopsis thaliana (Mouse-ear cress).